Reading from the N-terminus, the 89-residue chain is Small ribosomal subunit protein uS15 (89 aa).

This sequence belongs to the universal ribosomal protein uS15 family. In terms of assembly, part of the 30S ribosomal subunit. Forms a bridge to the 50S subunit in the 70S ribosome, contacting the 23S rRNA.

In terms of biological role, one of the primary rRNA binding proteins, it binds directly to 16S rRNA where it helps nucleate assembly of the platform of the 30S subunit by binding and bridging several RNA helices of the 16S rRNA. Its function is as follows. Forms an intersubunit bridge (bridge B4) with the 23S rRNA of the 50S subunit in the ribosome. The polypeptide is Small ribosomal subunit protein uS15 (Leuconostoc mesenteroides subsp. mesenteroides (strain ATCC 8293 / DSM 20343 / BCRC 11652 / CCM 1803 / JCM 6124 / NCDO 523 / NBRC 100496 / NCIMB 8023 / NCTC 12954 / NRRL B-1118 / 37Y)).